Here is a 442-residue protein sequence, read N- to C-terminus: Amino-acid acetyltransferase (442 aa).

The N-acetyltransferase domain occupies Glu-295–Ser-442.

Belongs to the acetyltransferase family. ArgA subfamily.

Its subcellular location is the cytoplasm. It carries out the reaction L-glutamate + acetyl-CoA = N-acetyl-L-glutamate + CoA + H(+). Its pathway is amino-acid biosynthesis; L-arginine biosynthesis; N(2)-acetyl-L-ornithine from L-glutamate: step 1/4. The protein is Amino-acid acetyltransferase of Aeromonas salmonicida (strain A449).